The chain runs to 89 residues: Small ribosomal subunit protein bS20 (89 aa).

Positions 1–29 are disordered; it reads MTLANIKSAKKRAVQSEKRRQHNASQRSM.

It belongs to the bacterial ribosomal protein bS20 family.

Functionally, binds directly to 16S ribosomal RNA. The polypeptide is Small ribosomal subunit protein bS20 (Haemophilus influenzae (strain 86-028NP)).